The sequence spans 105 residues: uncharacterized protein (105 aa).

The protein resides in the plastid. This is an uncharacterized protein from Euglena longa (Euglenophycean alga).